A 440-amino-acid chain; its full sequence is Transposon Ty1-JR2 Gag polyprotein (440 aa).

Residues M1–S16 are compositionally biased toward low complexity. 3 disordered regions span residues M1–Q93, P126–P173, and G352–Y440. Polar residues-rich tracts occupy residues T48–S60, S71–Q93, and Q127–F152. Residues T153–T165 show a composition bias toward low complexity. The segment at N299 to H401 is RNA-binding. Positions N402–S418 are enriched in low complexity. S416 bears the Phosphoserine mark. Over residues K419–N428 the composition is skewed to polar residues. The span at N429–Y440 shows a compositional bias: basic and acidic residues.

In terms of assembly, homotrimer.

Its subcellular location is the cytoplasm. Functionally, capsid protein (CA) is the structural component of the virus-like particle (VLP), forming the shell that encapsulates the retrotransposons dimeric RNA genome. The particles are assembled from trimer-clustered units and there are holes in the capsid shells that allow for the diffusion of macromolecules. CA also has nucleocapsid-like chaperone activity, promoting primer tRNA(i)-Met annealing to the multipartite primer-binding site (PBS), dimerization of Ty1 RNA and initiation of reverse transcription. The chain is Transposon Ty1-JR2 Gag polyprotein (TY1A-JR2) from Saccharomyces cerevisiae (strain ATCC 204508 / S288c) (Baker's yeast).